We begin with the raw amino-acid sequence, 377 residues long: tRNA-specific 2-thiouridylase MnmA (377 aa).

ATP contacts are provided by residues 16 to 23 (GMSGGVDS) and Met-42. The interaction with target base in tRNA stretch occupies residues 102-104 (NPD). Catalysis depends on Cys-107, which acts as the Nucleophile. A disulfide bridge links Cys-107 with Cys-204. Gly-131 provides a ligand contact to ATP. The interaction with tRNA stretch occupies residues 154 to 156 (KDQ). Cys-204 functions as the Cysteine persulfide intermediate in the catalytic mechanism. Positions 315 to 316 (RY) are interaction with tRNA.

Belongs to the MnmA/TRMU family.

It localises to the cytoplasm. The enzyme catalyses S-sulfanyl-L-cysteinyl-[protein] + uridine(34) in tRNA + AH2 + ATP = 2-thiouridine(34) in tRNA + L-cysteinyl-[protein] + A + AMP + diphosphate + H(+). In terms of biological role, catalyzes the 2-thiolation of uridine at the wobble position (U34) of tRNA, leading to the formation of s(2)U34. This Lacticaseibacillus paracasei (strain ATCC 334 / BCRC 17002 / CCUG 31169 / CIP 107868 / KCTC 3260 / NRRL B-441) (Lactobacillus paracasei) protein is tRNA-specific 2-thiouridylase MnmA.